Here is a 425-residue protein sequence, read N- to C-terminus: Light-independent protochlorophyllide reductase subunit N (425 aa).

Positions 17, 42, and 103 each coordinate [4Fe-4S] cluster.

This sequence belongs to the BchN/ChlN family. As to quaternary structure, protochlorophyllide reductase is composed of three subunits; ChlL, ChlN and ChlB. Forms a heterotetramer of two ChlB and two ChlN subunits. Requires [4Fe-4S] cluster as cofactor.

The catalysed reaction is chlorophyllide a + oxidized 2[4Fe-4S]-[ferredoxin] + 2 ADP + 2 phosphate = protochlorophyllide a + reduced 2[4Fe-4S]-[ferredoxin] + 2 ATP + 2 H2O. Its pathway is porphyrin-containing compound metabolism; chlorophyll biosynthesis (light-independent). In terms of biological role, component of the dark-operative protochlorophyllide reductase (DPOR) that uses Mg-ATP and reduced ferredoxin to reduce ring D of protochlorophyllide (Pchlide) to form chlorophyllide a (Chlide). This reaction is light-independent. The NB-protein (ChlN-ChlB) is the catalytic component of the complex. This is Light-independent protochlorophyllide reductase subunit N from Parasynechococcus marenigrum (strain WH8102).